The chain runs to 497 residues: Acetyltransferase adrJ (497 aa).

Catalysis depends on proton acceptor residues histidine 174 and aspartate 422. Residues 430-451 form a disordered region; it reads SSAQSSSQNTQKKGKPSYVNGV.

Belongs to the plant acyltransferase family. Monomer.

It participates in secondary metabolite biosynthesis; terpenoid biosynthesis. Acetyltransferase; part of the gene cluster that mediates the biosynthesis of andrastins, meroterpenoid compounds that exhibit inhibitory activity against ras farnesyltransferase, suggesting that they could be promising leads for antitumor agents. The first step of the pathway is the synthesis of 3,5-dimethylorsellinic acid (DMOA) by the polyketide synthase adrD via condensation of one acetyl-CoA starter unit with 3 malonyl-CoA units and 2 methylations. DMAO is then converted to farnesyl-DMAO by the prenyltransferase adrG. The methyltransferase adrK catalyzes the methylation of the carboxyl group of farnesyl-DMAO to farnesyl-DMAO methyl ester which is further converted to epoxyfarnesyl-DMAO methyl ester by the FAD-dependent monooxygenase adrH. The terpene cyclase adrI then catalyzes the carbon skeletal rearrangement to generate the andrastin E, the first compound in the pathway having the andrastin scaffold, with the tetracyclic ring system. The post-cyclization tailoring enzymes adrF, adrE, adrJ, and adrA, are involved in the conversion of andrastin E into andrastin A. The short chain dehydrogenase adrF is responsible for the oxidation of the C-3 a hydroxyl group of andrastin E to yield the corresponding ketone, andrastin D. The ketoreductase adrE stereoselectively reduces the carbonyl moiety to reverse the stereochemistry of the C-3 position to yield andrastin F. The acetyltransferase adrJ is the acetyltransferase that attaches the acetyl group to the C-3 hydroxyl group of andrastin F to yield andrastin C. Finally, the cytochrome P450 monooxygenase adrA catalyzes two sequential oxidation reactions of the C-23 methyl group, to generate the corresponding alcohol andrastin B, and aldehyde andrastin A. This chain is Acetyltransferase adrJ, found in Penicillium rubens (strain ATCC 28089 / DSM 1075 / NRRL 1951 / Wisconsin 54-1255) (Penicillium chrysogenum).